A 443-amino-acid chain; its full sequence is Anthocyanidin 3-O-glucoside 5-O-glucosyltransferase 2 (443 aa).

A signal peptide spans 1 to 22 (MVRRRVLLATFPAQGHINPALQ). His-16 serves as the catalytic Proton acceptor. An anthocyanidin is bound at residue His-16. Positions 340, 355, 358, 359, 360, 363, 379, and 380 each coordinate UDP-alpha-D-glucose.

The protein belongs to the UDP-glycosyltransferase family.

The catalysed reaction is an anthocyanidin 3-O-beta-D-glucoside + UDP-alpha-D-glucose = an anthocyanidin 3,5-di-O-beta-D-glucoside + UDP + 2 H(+). The protein operates within pigment biosynthesis; anthocyanin biosynthesis. Functionally, catalyzes the glucosylation at the O-5 position of anthocyanidin 3-glucosides to form anthocyanidin 3,5-di-O-glucosides using UDP-glucose as sugar donor. Anthocyanidin 3,5-di-O-glucosides are molecules that are responsible for pigmentation. Also acts on anthocyanidin 3-O-(6-O-malonylglucoside). Much less active with hydroxycinnamoylglucose derivatives. No activity in the absence of the 3-O-glucoside group. The protein is Anthocyanidin 3-O-glucoside 5-O-glucosyltransferase 2 (PF3R6) of Perilla frutescens (Beefsteak mint).